Reading from the N-terminus, the 195-residue chain is Large ribosomal subunit protein bL32m (195 aa).

Zn(2+) contacts are provided by cysteine 95, cysteine 98, cysteine 108, and cysteine 111.

Belongs to the bacterial ribosomal protein bL32 family. In terms of assembly, component of the mitochondrial large ribosomal subunit (mt-LSU).

The protein localises to the mitochondrion. Its function is as follows. Component of the mitochondrial large ribosomal subunit (mt-LSU). The mitochondrial ribosome (mitoribosome) is a large ribonucleoprotein complex responsible for the synthesis of proteins inside mitochondria. This chain is Large ribosomal subunit protein bL32m (mRpL32), found in Drosophila melanogaster (Fruit fly).